The primary structure comprises 479 residues: Putative F-box/LRR-repeat protein At1g56400 (479 aa).

The F-box domain occupies 12-60 (QDRLSNLPDVLLIMIISCLSFKECIRTSVLAKRWRYLCRETRNISFKET). 7 LRR repeats span residues 99-129 (YFSI…VLDF), 139-167 (CASR…KIYS), 186-211 (IGWI…SINY), 228-254 (VFES…KYSG), 287-312 (RTKL…SVCP), 342-367 (LHVM…TFDI), and 419-446 (LKFL…ELYM).

The polypeptide is Putative F-box/LRR-repeat protein At1g56400 (Arabidopsis thaliana (Mouse-ear cress)).